The sequence spans 116 residues: Large ribosomal subunit protein bL17 (116 aa).

It belongs to the bacterial ribosomal protein bL17 family. Part of the 50S ribosomal subunit. Contacts protein L32.

The protein is Large ribosomal subunit protein bL17 of Synechococcus sp. (strain WH7803).